The sequence spans 148 residues: Ribosome maturation factor RimP (148 aa).

It belongs to the RimP family.

It is found in the cytoplasm. Its function is as follows. Required for maturation of 30S ribosomal subunits. This chain is Ribosome maturation factor RimP, found in Treponema denticola (strain ATCC 35405 / DSM 14222 / CIP 103919 / JCM 8153 / KCTC 15104).